The following is a 392-amino-acid chain: Streptogrisin-D (392 aa).

The first 64 residues, 1-64 (MCVSRRRNSG…AGFTFQTANA (64 aa)), serve as a signal peptide directing secretion. The propeptide occupies 65 to 204 (SDDVPAFGAK…NRTAGEFTPL (140 aa)). A disulfide bridge connects residues cysteine 218 and cysteine 238. Active-site charge relay system residues include histidine 237, aspartate 266, and serine 348. A disulfide bridge connects residues cysteine 342 and cysteine 369.

It belongs to the peptidase S1 family. In terms of assembly, homodimer.

Functionally, has a primary specificity for large aliphatic or aromatic amino acids. The polypeptide is Streptogrisin-D (sprD) (Streptomyces griseus).